The chain runs to 393 residues: Acetylornithine aminotransferase (393 aa).

Pyridoxal 5'-phosphate contacts are provided by residues 102–103 (GA) and phenylalanine 136. Arginine 139 is a binding site for N(2)-acetyl-L-ornithine. Pyridoxal 5'-phosphate is bound at residue 219–222 (DEVQ). Lysine 248 bears the N6-(pyridoxal phosphate)lysine mark. N(2)-acetyl-L-ornithine is bound at residue serine 274. Threonine 275 provides a ligand contact to pyridoxal 5'-phosphate.

This sequence belongs to the class-III pyridoxal-phosphate-dependent aminotransferase family. ArgD subfamily. Homodimer. Pyridoxal 5'-phosphate is required as a cofactor.

The protein localises to the cytoplasm. The catalysed reaction is N(2)-acetyl-L-ornithine + 2-oxoglutarate = N-acetyl-L-glutamate 5-semialdehyde + L-glutamate. Its pathway is amino-acid biosynthesis; L-arginine biosynthesis; N(2)-acetyl-L-ornithine from L-glutamate: step 4/4. This Wolinella succinogenes (strain ATCC 29543 / DSM 1740 / CCUG 13145 / JCM 31913 / LMG 7466 / NCTC 11488 / FDC 602W) (Vibrio succinogenes) protein is Acetylornithine aminotransferase.